The chain runs to 358 residues: tRNA N6-adenosine threonylcarbamoyltransferase (358 aa).

Fe cation contacts are provided by His-122 and His-126. Residues 145–149 (LVSGG), Asp-178, Gly-191, and Asn-287 each bind substrate. Asp-315 serves as a coordination point for Fe cation.

Belongs to the KAE1 / TsaD family. Fe(2+) is required as a cofactor.

The protein localises to the cytoplasm. It carries out the reaction L-threonylcarbamoyladenylate + adenosine(37) in tRNA = N(6)-L-threonylcarbamoyladenosine(37) in tRNA + AMP + H(+). In terms of biological role, required for the formation of a threonylcarbamoyl group on adenosine at position 37 (t(6)A37) in tRNAs that read codons beginning with adenine. Is involved in the transfer of the threonylcarbamoyl moiety of threonylcarbamoyl-AMP (TC-AMP) to the N6 group of A37, together with TsaE and TsaB. TsaD likely plays a direct catalytic role in this reaction. The polypeptide is tRNA N6-adenosine threonylcarbamoyltransferase (Hydrogenovibrio crunogenus (strain DSM 25203 / XCL-2) (Thiomicrospira crunogena)).